The primary structure comprises 364 residues: Peptide chain release factor 1 (364 aa).

Gln-238 carries the N5-methylglutamine modification.

The protein belongs to the prokaryotic/mitochondrial release factor family. Methylated by PrmC. Methylation increases the termination efficiency of RF1.

It is found in the cytoplasm. Peptide chain release factor 1 directs the termination of translation in response to the peptide chain termination codons UAG and UAA. This chain is Peptide chain release factor 1, found in Psychrobacter sp. (strain PRwf-1).